A 406-amino-acid chain; its full sequence is MDTRAFKRSLHHSERYNRRGFGRAEEVAGSLEQAYQSELIQSIRENGYELREGRVTIRLAEAFGFCWGVERAVAIAYETRRHYPTERIWITNEIIHNPSVNAHLVEMNVLFIPVEEGVKDFSGVESGDVVILPAFGATVQEMQLLNERGCHIVDTTCPWVSKVWNSVERHKKNSFTSVIHGKVKHEETLATSSFAGTYLVVLDLEEAQLVCDYILGNGNREAFLKRFAGATSPGFDPDRDLSRIGVANQTTMLKSETEDIGRLFERTLLRRYGPTDLNDHFLAFNTICDATQERQDAMFSLVDEPLDLMVVIGGYNSSNTTHLQEIAVSRGIPSVHIDAPERIGPGNAVEHKPLGQDLERLEPFLPEGDLRIGITSGASTPDRVVEGVIDRLLQLAEAGQIAAEIA.

Cysteine 66 contributes to the [4Fe-4S] cluster binding site. Histidine 96 contacts (2E)-4-hydroxy-3-methylbut-2-enyl diphosphate. Histidine 96 contributes to the dimethylallyl diphosphate binding site. Histidine 96 contributes to the isopentenyl diphosphate binding site. Cysteine 157 is a [4Fe-4S] cluster binding site. Histidine 185 is a binding site for (2E)-4-hydroxy-3-methylbut-2-enyl diphosphate. Histidine 185 contributes to the dimethylallyl diphosphate binding site. Histidine 185 contributes to the isopentenyl diphosphate binding site. The Proton donor role is filled by glutamate 187. Residue threonine 250 coordinates (2E)-4-hydroxy-3-methylbut-2-enyl diphosphate. Residue cysteine 288 coordinates [4Fe-4S] cluster. 4 residues coordinate (2E)-4-hydroxy-3-methylbut-2-enyl diphosphate: serine 317, serine 318, asparagine 319, and serine 379. Dimethylallyl diphosphate contacts are provided by serine 317, serine 318, asparagine 319, and serine 379. 4 residues coordinate isopentenyl diphosphate: serine 317, serine 318, asparagine 319, and serine 379.

Belongs to the IspH family. It depends on [4Fe-4S] cluster as a cofactor.

The enzyme catalyses isopentenyl diphosphate + 2 oxidized [2Fe-2S]-[ferredoxin] + H2O = (2E)-4-hydroxy-3-methylbut-2-enyl diphosphate + 2 reduced [2Fe-2S]-[ferredoxin] + 2 H(+). It catalyses the reaction dimethylallyl diphosphate + 2 oxidized [2Fe-2S]-[ferredoxin] + H2O = (2E)-4-hydroxy-3-methylbut-2-enyl diphosphate + 2 reduced [2Fe-2S]-[ferredoxin] + 2 H(+). It functions in the pathway isoprenoid biosynthesis; dimethylallyl diphosphate biosynthesis; dimethylallyl diphosphate from (2E)-4-hydroxy-3-methylbutenyl diphosphate: step 1/1. Its pathway is isoprenoid biosynthesis; isopentenyl diphosphate biosynthesis via DXP pathway; isopentenyl diphosphate from 1-deoxy-D-xylulose 5-phosphate: step 6/6. In terms of biological role, catalyzes the conversion of 1-hydroxy-2-methyl-2-(E)-butenyl 4-diphosphate (HMBPP) into a mixture of isopentenyl diphosphate (IPP) and dimethylallyl diphosphate (DMAPP). Acts in the terminal step of the DOXP/MEP pathway for isoprenoid precursor biosynthesis. The polypeptide is 4-hydroxy-3-methylbut-2-enyl diphosphate reductase (Synechococcus sp. (strain RCC307)).